We begin with the raw amino-acid sequence, 213 residues long: Kynurenine formamidase (213 aa).

Position 18 (tryptophan 18) interacts with substrate. Positions 48, 52, and 54 each coordinate Zn(2+). Histidine 58 (proton donor/acceptor) is an active-site residue. Zn(2+) is bound by residues histidine 160 and glutamate 172.

This sequence belongs to the Cyclase 1 superfamily. KynB family. In terms of assembly, homodimer. The cofactor is Zn(2+).

The enzyme catalyses N-formyl-L-kynurenine + H2O = L-kynurenine + formate + H(+). It functions in the pathway amino-acid degradation; L-tryptophan degradation via kynurenine pathway; L-kynurenine from L-tryptophan: step 2/2. In terms of biological role, catalyzes the hydrolysis of N-formyl-L-kynurenine to L-kynurenine, the second step in the kynurenine pathway of tryptophan degradation. In Burkholderia cenocepacia (strain ATCC BAA-245 / DSM 16553 / LMG 16656 / NCTC 13227 / J2315 / CF5610) (Burkholderia cepacia (strain J2315)), this protein is Kynurenine formamidase.